We begin with the raw amino-acid sequence, 279 residues long: 2-dehydro-3-deoxyphosphooctonate aldolase (279 aa).

This sequence belongs to the KdsA family.

Its subcellular location is the cytoplasm. It catalyses the reaction D-arabinose 5-phosphate + phosphoenolpyruvate + H2O = 3-deoxy-alpha-D-manno-2-octulosonate-8-phosphate + phosphate. It functions in the pathway carbohydrate biosynthesis; 3-deoxy-D-manno-octulosonate biosynthesis; 3-deoxy-D-manno-octulosonate from D-ribulose 5-phosphate: step 2/3. It participates in bacterial outer membrane biogenesis; lipopolysaccharide biosynthesis. This is 2-dehydro-3-deoxyphosphooctonate aldolase from Desulfosudis oleivorans (strain DSM 6200 / JCM 39069 / Hxd3) (Desulfococcus oleovorans).